The primary structure comprises 488 residues: GTPase Der (488 aa).

EngA-type G domains are found at residues 3 to 166 (PVVA…AEAM) and 199 to 372 (IKLA…DSAT). Residues 9–16 (GRPNVGKS), 56–60 (DTGGI), 118–121 (NKID), 205–212 (GKPNVGKS), 252–256 (DTAGV), and 317–320 (NKWD) each bind GTP. Positions 373 to 457 (RRVSTSMLTR…PIQLRFQEGD (85 aa)) constitute a KH-like domain.

This sequence belongs to the TRAFAC class TrmE-Era-EngA-EngB-Septin-like GTPase superfamily. EngA (Der) GTPase family. Associates with the 50S ribosomal subunit.

Functionally, GTPase that plays an essential role in the late steps of ribosome biogenesis. In Shewanella sp. (strain MR-7), this protein is GTPase Der.